Reading from the N-terminus, the 38-residue chain is Cytochrome b6-f complex subunit 5 (38 aa).

The chain crosses the membrane as a helical span at residues 5–25; sequence LLSGIVLGSIPITLAGSFVTA.

It belongs to the PetG family. The 4 large subunits of the cytochrome b6-f complex are cytochrome b6, subunit IV (17 kDa polypeptide, PetD), cytochrome f and the Rieske protein, while the 4 small subunits are PetG, PetL, PetM and PetN. The complex functions as a dimer.

Its subcellular location is the plastid. It is found in the chloroplast thylakoid membrane. In terms of biological role, component of the cytochrome b6-f complex, which mediates electron transfer between photosystem II (PSII) and photosystem I (PSI), cyclic electron flow around PSI, and state transitions. PetG is required for either the stability or assembly of the cytochrome b6-f complex. In Huperzia lucidula (Shining clubmoss), this protein is Cytochrome b6-f complex subunit 5.